Consider the following 200-residue polypeptide: Recombination protein RecR (200 aa).

The C4-type zinc-finger motif lies at 58 to 73; that stretch reads CSICGNITEDDPCPIC. The Toprim domain maps to 81-177; it reads SQILVVEQSQ…KVTRLAHGLS (97 aa).

This sequence belongs to the RecR family.

May play a role in DNA repair. It seems to be involved in an RecBC-independent recombinational process of DNA repair. It may act with RecF and RecO. This Limosilactobacillus reuteri (strain DSM 20016) (Lactobacillus reuteri) protein is Recombination protein RecR.